A 296-amino-acid chain; its full sequence is Enoyl-CoA hydratase domain-containing protein 2, mitochondrial (296 aa).

Residues 1–17 constitute a mitochondrion transit peptide; it reads MLRVLPRALRLPCSWRF. Lys-101 carries the post-translational modification N6-acetyllysine; alternate. Lys-101 bears the N6-succinyllysine; alternate mark.

Belongs to the enoyl-CoA hydratase/isomerase family.

It localises to the mitochondrion. This Mus musculus (Mouse) protein is Enoyl-CoA hydratase domain-containing protein 2, mitochondrial (Echdc2).